The sequence spans 523 residues: Apoptosis inhibitor 5-B (523 aa).

Residues 1-360 form an ARM-like and Heat-like helical repeats region; sequence MPTVEELYRN…HQLGRKLPDF (360 aa). The tract at residues 446 to 523 is disordered; that stretch reads VQKTDSGQKR…RGNRSRGRIY (78 aa). Residues 454–475 carry the Nuclear localization signal motif; that stretch reads KRMSDETSSTSPPKKPVVGPKR. Residues 502–515 show a composition bias toward gly residues; it reads GFQGGRGRGWGGRG.

Belongs to the API5 family. As to quaternary structure, monomer.

Its subcellular location is the nucleus. May be an antiapoptotic factor. This is Apoptosis inhibitor 5-B (api5-b) from Xenopus laevis (African clawed frog).